The sequence spans 356 residues: S-adenosylmethionine:tRNA ribosyltransferase-isomerase (356 aa).

The protein belongs to the QueA family. Monomer.

The protein localises to the cytoplasm. It catalyses the reaction 7-aminomethyl-7-carbaguanosine(34) in tRNA + S-adenosyl-L-methionine = epoxyqueuosine(34) in tRNA + adenine + L-methionine + 2 H(+). The protein operates within tRNA modification; tRNA-queuosine biosynthesis. Functionally, transfers and isomerizes the ribose moiety from AdoMet to the 7-aminomethyl group of 7-deazaguanine (preQ1-tRNA) to give epoxyqueuosine (oQ-tRNA). The polypeptide is S-adenosylmethionine:tRNA ribosyltransferase-isomerase (Escherichia coli O6:K15:H31 (strain 536 / UPEC)).